We begin with the raw amino-acid sequence, 184 residues long: Large ribosomal subunit protein uL18 (184 aa).

The protein belongs to the universal ribosomal protein uL18 family. In terms of assembly, part of the 50S ribosomal subunit. Contacts the 5S and 23S rRNAs.

Functionally, this is one of the proteins that bind and probably mediate the attachment of the 5S RNA into the large ribosomal subunit, where it forms part of the central protuberance. This chain is Large ribosomal subunit protein uL18, found in Haloferax mediterranei (strain ATCC 33500 / DSM 1411 / JCM 8866 / NBRC 14739 / NCIMB 2177 / R-4) (Halobacterium mediterranei).